We begin with the raw amino-acid sequence, 518 residues long: Protein nucleotidyltransferase YdiU (518 aa).

ATP-binding residues include glycine 100, glycine 102, arginine 103, lysine 123, aspartate 135, glycine 136, arginine 193, and arginine 200. The active-site Proton acceptor is aspartate 270. Asparagine 271 and aspartate 280 together coordinate Mg(2+). Residue aspartate 280 coordinates ATP.

This sequence belongs to the SELO family. Mg(2+) is required as a cofactor. Mn(2+) serves as cofactor.

The catalysed reaction is L-seryl-[protein] + ATP = 3-O-(5'-adenylyl)-L-seryl-[protein] + diphosphate. It carries out the reaction L-threonyl-[protein] + ATP = 3-O-(5'-adenylyl)-L-threonyl-[protein] + diphosphate. The enzyme catalyses L-tyrosyl-[protein] + ATP = O-(5'-adenylyl)-L-tyrosyl-[protein] + diphosphate. It catalyses the reaction L-histidyl-[protein] + UTP = N(tele)-(5'-uridylyl)-L-histidyl-[protein] + diphosphate. The catalysed reaction is L-seryl-[protein] + UTP = O-(5'-uridylyl)-L-seryl-[protein] + diphosphate. It carries out the reaction L-tyrosyl-[protein] + UTP = O-(5'-uridylyl)-L-tyrosyl-[protein] + diphosphate. Functionally, nucleotidyltransferase involved in the post-translational modification of proteins. It can catalyze the addition of adenosine monophosphate (AMP) or uridine monophosphate (UMP) to a protein, resulting in modifications known as AMPylation and UMPylation. The sequence is that of Protein nucleotidyltransferase YdiU from Xanthomonas oryzae pv. oryzae (strain PXO99A).